We begin with the raw amino-acid sequence, 388 residues long: Succinate--CoA ligase [ADP-forming] subunit beta (388 aa).

The ATP-grasp domain occupies 9–244; sequence KALFAEYGLP…PSQDDAREAH (236 aa). Residues K46, 53–55, E99, T102, and E107 each bind ATP; that span reads GRG. Residues N199 and D213 each contribute to the Mg(2+) site. Residues N264 and 321-323 each bind substrate; that span reads GIV.

This sequence belongs to the succinate/malate CoA ligase beta subunit family. As to quaternary structure, heterotetramer of two alpha and two beta subunits. It depends on Mg(2+) as a cofactor.

The enzyme catalyses succinate + ATP + CoA = succinyl-CoA + ADP + phosphate. The catalysed reaction is GTP + succinate + CoA = succinyl-CoA + GDP + phosphate. It participates in carbohydrate metabolism; tricarboxylic acid cycle; succinate from succinyl-CoA (ligase route): step 1/1. Its function is as follows. Succinyl-CoA synthetase functions in the citric acid cycle (TCA), coupling the hydrolysis of succinyl-CoA to the synthesis of either ATP or GTP and thus represents the only step of substrate-level phosphorylation in the TCA. The beta subunit provides nucleotide specificity of the enzyme and binds the substrate succinate, while the binding sites for coenzyme A and phosphate are found in the alpha subunit. The protein is Succinate--CoA ligase [ADP-forming] subunit beta of Shewanella sediminis (strain HAW-EB3).